Consider the following 494-residue polypeptide: Cytochrome P450 2A13 (494 aa).

Asparagine 297 is a binding site for substrate. A heme-binding site is contributed by cysteine 439.

Belongs to the cytochrome P450 family. Heme is required as a cofactor. Expressed in liver and a number of extrahepatic tissues, including nasal mucosa, lung, trachea, brain, mammary gland, prostate, testis, and uterus, but not in heart, kidney, bone marrow, colon, small intestine, spleen, stomach, thymus, or skeletal muscle.

The protein localises to the endoplasmic reticulum membrane. The protein resides in the microsome membrane. It catalyses the reaction an organic molecule + reduced [NADPH--hemoprotein reductase] + O2 = an alcohol + oxidized [NADPH--hemoprotein reductase] + H2O + H(+). Its function is as follows. Exhibits a coumarin 7-hydroxylase activity. Active in the metabolic activation of hexamethylphosphoramide, N,N-dimethylaniline, 2'-methoxyacetophenone, N-nitrosomethylphenylamine, and the tobacco-specific carcinogen, 4-(methylnitrosamino)-1-(3-pyridyl)-1-butanone. Possesses phenacetin O-deethylation activity. The protein is Cytochrome P450 2A13 (CYP2A13) of Homo sapiens (Human).